The primary structure comprises 318 residues: NADH-ubiquinone oxidoreductase chain 1 (318 aa).

Helical transmembrane passes span 2-22, 70-90, 100-120, 140-160, 172-192, 217-237, 253-273, and 294-314; these read FLVNLLLMIIPILLAVAFLTL, MFIMAPILALSLALTMWTPLP, LGVLFILAMSSLAVYSILWSG, ISYEVTLAIILLSVLLMSGSF, LWLIIPAWPLAMMWFISTLAE, GGSFALFFLAEYANIIMMNAI, EFYTTSFMIKTLLMTITFLWI, and LPLTLALCMWHVSIPILTASI.

Belongs to the complex I subunit 1 family. As to quaternary structure, core subunit of respiratory chain NADH dehydrogenase (Complex I) which is composed of 45 different subunits.

The protein resides in the mitochondrion inner membrane. It carries out the reaction a ubiquinone + NADH + 5 H(+)(in) = a ubiquinol + NAD(+) + 4 H(+)(out). Functionally, core subunit of the mitochondrial membrane respiratory chain NADH dehydrogenase (Complex I) which catalyzes electron transfer from NADH through the respiratory chain, using ubiquinone as an electron acceptor. Essential for the catalytic activity and assembly of complex I. The polypeptide is NADH-ubiquinone oxidoreductase chain 1 (MT-ND1) (Emballonura alecto (Philippine sheath-tailed bat)).